A 616-amino-acid chain; its full sequence is MPKYRSATTTHGRNMAGARALWRATGMTDADFGKPIIAVVNSFTQFVPGHVHLRDLGRLVAAQIEATGGVAKEFNTIAVDDGIAMGHGGMLYSLPSRELIADSVEYMVNAHCADAMVCISNCDKITPGMMMAALRLNIPVIFVSGGPMEAGKTKLSDRLIKLDLVDAMIQGANPQVSDAQSEQIERAACPTCGSCSGMFTANSMNCLTEALGLALPGNGSLLATHADRRALFEEAGQRIVALTRRYYEQDDVSVLPRSIACKAAFENAMTLDIAMGGSTNTVLHLLAAAQEGEIDFTLADIDRLSRQVPHLCKVAPSTPDYHMEDVHRAGGVMGILGELDRAGLLNRGVANVLGLGLSETLARYDIMRSDDDALQRLYRAGPAGLRTVEPFAQSCRWDALDRDRQQGCIRAREHAYSQDGGLAVLSGNLAQDGCIVKTAGVDPDSLVFRGPARVFESQEEAVEAILGGRIHPGDVLVIRYEGPKGGPGMQEMLYPTAYLKSMGLGKQCALITDGRFSGGTSGLSIGHVSPEAASGGAIALVRDGDPIEIDIPVRHIRLAIAESELALRRQQELARGTQAWTPRDRRRKVSLALRAYASLATSADRGAVRDRAKLGG.

D81 serves as a coordination point for Mg(2+). C122 contributes to the [2Fe-2S] cluster binding site. Residues D123 and K124 each coordinate Mg(2+). K124 bears the N6-carboxylysine mark. C195 is a [2Fe-2S] cluster binding site. E491 is a binding site for Mg(2+). The active-site Proton acceptor is S517.

The protein belongs to the IlvD/Edd family. In terms of assembly, homodimer. It depends on [2Fe-2S] cluster as a cofactor. Mg(2+) is required as a cofactor.

It carries out the reaction (2R)-2,3-dihydroxy-3-methylbutanoate = 3-methyl-2-oxobutanoate + H2O. The catalysed reaction is (2R,3R)-2,3-dihydroxy-3-methylpentanoate = (S)-3-methyl-2-oxopentanoate + H2O. It participates in amino-acid biosynthesis; L-isoleucine biosynthesis; L-isoleucine from 2-oxobutanoate: step 3/4. Its pathway is amino-acid biosynthesis; L-valine biosynthesis; L-valine from pyruvate: step 3/4. Its function is as follows. Functions in the biosynthesis of branched-chain amino acids. Catalyzes the dehydration of (2R,3R)-2,3-dihydroxy-3-methylpentanoate (2,3-dihydroxy-3-methylvalerate) into 2-oxo-3-methylpentanoate (2-oxo-3-methylvalerate) and of (2R)-2,3-dihydroxy-3-methylbutanoate (2,3-dihydroxyisovalerate) into 2-oxo-3-methylbutanoate (2-oxoisovalerate), the penultimate precursor to L-isoleucine and L-valine, respectively. The protein is Dihydroxy-acid dehydratase of Edwardsiella ictaluri (strain 93-146).